The primary structure comprises 254 residues: Tryptophan synthase alpha chain (254 aa).

Catalysis depends on proton acceptor residues E48 and D59.

It belongs to the TrpA family. As to quaternary structure, tetramer of two alpha and two beta chains.

The catalysed reaction is (1S,2R)-1-C-(indol-3-yl)glycerol 3-phosphate + L-serine = D-glyceraldehyde 3-phosphate + L-tryptophan + H2O. It functions in the pathway amino-acid biosynthesis; L-tryptophan biosynthesis; L-tryptophan from chorismate: step 5/5. In terms of biological role, the alpha subunit is responsible for the aldol cleavage of indoleglycerol phosphate to indole and glyceraldehyde 3-phosphate. The sequence is that of Tryptophan synthase alpha chain from Desulfotalea psychrophila (strain LSv54 / DSM 12343).